Reading from the N-terminus, the 637-residue chain is 1-deoxy-D-xylulose-5-phosphate synthase (637 aa).

Thiamine diphosphate-binding positions include His-76 and 117 to 119 (GHS). Position 148 (Asp-148) interacts with Mg(2+). Thiamine diphosphate-binding positions include 149–150 (GA), Asn-177, Tyr-294, and Glu-381. Asn-177 is a Mg(2+) binding site.

It belongs to the transketolase family. DXPS subfamily. In terms of assembly, homodimer. It depends on Mg(2+) as a cofactor. Thiamine diphosphate is required as a cofactor.

The enzyme catalyses D-glyceraldehyde 3-phosphate + pyruvate + H(+) = 1-deoxy-D-xylulose 5-phosphate + CO2. Its pathway is metabolic intermediate biosynthesis; 1-deoxy-D-xylulose 5-phosphate biosynthesis; 1-deoxy-D-xylulose 5-phosphate from D-glyceraldehyde 3-phosphate and pyruvate: step 1/1. In terms of biological role, catalyzes the acyloin condensation reaction between C atoms 2 and 3 of pyruvate and glyceraldehyde 3-phosphate to yield 1-deoxy-D-xylulose-5-phosphate (DXP). The polypeptide is 1-deoxy-D-xylulose-5-phosphate synthase (Neisseria meningitidis serogroup B (strain ATCC BAA-335 / MC58)).